The sequence spans 297 residues: Probable endonuclease 4 (297 aa).

Zn(2+)-binding residues include histidine 69, histidine 110, glutamate 145, aspartate 179, histidine 182, histidine 214, aspartate 227, histidine 229, and glutamate 259.

This sequence belongs to the AP endonuclease 2 family. Zn(2+) serves as cofactor.

It carries out the reaction Endonucleolytic cleavage to 5'-phosphooligonucleotide end-products.. Its function is as follows. Endonuclease IV plays a role in DNA repair. It cleaves phosphodiester bonds at apurinic or apyrimidinic (AP) sites, generating a 3'-hydroxyl group and a 5'-terminal sugar phosphate. The chain is Probable endonuclease 4 from Bacillus subtilis (strain 168).